Consider the following 1032-residue polypeptide: Contactin-1a (1032 aa).

The signal sequence occupies residues 1 to 31 (MIPEAFQPRAMKHTTTVLMLALSSRFWSVCA). Ig-like C2-type domains follow at residues 46-139 (PVFE…ARVQ), 144-231 (DMFS…KSVF), 249-335 (PADI…THLY), 340-417 (PDWL…AELR), 423-510 (PSFQ…GSLS), and 515-612 (TKIT…AELV). Intrachain disulfides connect Cys70-Cys122 and Cys166-Cys219. Residues Asn119, Asn216, and Asn266 are each glycosylated (N-linked (GlcNAc...) asparagine). 3 disulfide bridges follow: Cys271/Cys319, Cys361/Cys401, and Cys446/Cys494. Asn455, Asn467, Asn483, and Asn504 each carry an N-linked (GlcNAc...) asparagine glycan. Cys536 and Cys596 form a disulfide bridge. Asn604 carries an N-linked (GlcNAc...) asparagine glycan. 4 Fibronectin type-III domains span residues 619-718 (PPGG…TREA), 723-820 (APSD…SAQD), 825-918 (APII…TKKS), and 920-1015 (PSRP…APAP). Residues 699 to 729 (NTLGTGPPSEPSPKTTTREARPIVAPSDIGG) form a disordered region. Residue Asn879 is glycosylated (N-linked (GlcNAc...) asparagine). A disordered region spans residues 907-926 (ASQRNRIYTKKSPPSRPPKI). Asn950 is a glycosylation site (N-linked (GlcNAc...) asparagine). Residue Gly1010 is the site of GPI-anchor amidated glycine attachment. Positions 1011 to 1032 (SAPAPALASALLLLPLLWTLML) are cleaved as a propeptide — removed in mature form.

It belongs to the immunoglobulin superfamily. Contactin family. Expressed in brain.

Its subcellular location is the cell membrane. Its function is as follows. Mediates cell surface interactions during nervous system development. This Danio rerio (Zebrafish) protein is Contactin-1a (cntn1a).